Reading from the N-terminus, the 356-residue chain is Trans-enoyl reductase pgmF (356 aa).

Residues valine 57 to lysine 60, serine 175 to cysteine 178, serine 198 to asparagine 201, tyrosine 216, valine 261 to glycine 262, and alanine 342 to lysine 343 each bind NADP(+).

This sequence belongs to the zinc-containing alcohol dehydrogenase family.

FAD-linked oxidoreductase; part of the gene cluster that mediates the biosynthesis of pleosporalin A, ascomycone A, as well as a third cryptic naphthoquinone derived pigment, all responsible for the coloration of conidia. The pathway begins with the biosynthesis of the cyclized heptaketide 3-acetonyl-1,6,8-trihydroxy-2-naphthaldehyde by the NR-PKS pgmA. The C-6 hydroxyl group is further methylated by the O-methyltransferase pgmB to yield fusarubinaldehyde which is in turn oxidized by the cytochrome P450 monooxygenase pgmC at C-9. The C-1 hydroxyl group is then methylated spontaneously. Although pgmE, pgmD and pgmH are essential for the production of pleosporalin A, it is not the case for the 2 other final products and it remains difficult to assign a specific function to each enzyme. PgmF and pgmG seem not to be involved in pigment biosynthesis although they were regulated by the cluster-specific transcription factor pgmR. The polypeptide is Trans-enoyl reductase pgmF (Aspergillus terreus (strain NIH 2624 / FGSC A1156)).